Reading from the N-terminus, the 223-residue chain is ATP phosphoribosyltransferase (223 aa).

This sequence belongs to the ATP phosphoribosyltransferase family. Short subfamily. In terms of assembly, heteromultimer composed of HisG and HisZ subunits.

The protein localises to the cytoplasm. It carries out the reaction 1-(5-phospho-beta-D-ribosyl)-ATP + diphosphate = 5-phospho-alpha-D-ribose 1-diphosphate + ATP. The protein operates within amino-acid biosynthesis; L-histidine biosynthesis; L-histidine from 5-phospho-alpha-D-ribose 1-diphosphate: step 1/9. Its function is as follows. Catalyzes the condensation of ATP and 5-phosphoribose 1-diphosphate to form N'-(5'-phosphoribosyl)-ATP (PR-ATP). Has a crucial role in the pathway because the rate of histidine biosynthesis seems to be controlled primarily by regulation of HisG enzymatic activity. This Halothermothrix orenii (strain H 168 / OCM 544 / DSM 9562) protein is ATP phosphoribosyltransferase.